A 165-amino-acid polypeptide reads, in one-letter code: ATP synthase subunit b (165 aa).

A helical transmembrane segment spans residues 5 to 27 (INSTTLGNIIITLGSVFLLYYLI).

It belongs to the ATPase B chain family. As to quaternary structure, F-type ATPases have 2 components, F(1) - the catalytic core - and F(0) - the membrane proton channel. F(1) has five subunits: alpha(3), beta(3), gamma(1), delta(1), epsilon(1). F(0) has three main subunits: a(1), b(2) and c(10-14). The alpha and beta chains form an alternating ring which encloses part of the gamma chain. F(1) is attached to F(0) by a central stalk formed by the gamma and epsilon chains, while a peripheral stalk is formed by the delta and b chains.

The protein resides in the cell membrane. Its function is as follows. F(1)F(0) ATP synthase produces ATP from ADP in the presence of a proton or sodium gradient. F-type ATPases consist of two structural domains, F(1) containing the extramembraneous catalytic core and F(0) containing the membrane proton channel, linked together by a central stalk and a peripheral stalk. During catalysis, ATP synthesis in the catalytic domain of F(1) is coupled via a rotary mechanism of the central stalk subunits to proton translocation. Component of the F(0) channel, it forms part of the peripheral stalk, linking F(1) to F(0). This Streptococcus thermophilus (strain CNRZ 1066) protein is ATP synthase subunit b.